We begin with the raw amino-acid sequence, 449 residues long: Neuraminidase (449 aa).

The Intravirion portion of the chain corresponds to 1 to 6 (MNPNQK). The helical transmembrane segment at 7 to 34 (IITIGSICMVTGIVSLMLQIGNMISIWV) threads the bilayer. Residues 11 to 33 (GSICMVTGIVSLMLQIGNMISIW) are involved in apical transport and lipid raft association. Residues 35 to 449 (SHSIHTGNQH…GAELPFTIDK (415 aa)) lie on the Virion surface side of the membrane. Positions 36-70 (HSIHTGNQHQSEPISNTNFLTEKAVASVKLAGNSS) are hypervariable stalk region. A head of neuraminidase region spans residues 71–449 (LCPINGWAVY…GAELPFTIDK (379 aa)). Cystine bridges form between C72–C397, C104–C109, C164–C211, C213–C218, C259–C272, C261–C270, C298–C315, and C401–C426. R98 lines the substrate pocket. D131 functions as the Proton donor/acceptor in the catalytic mechanism. R132 contacts substrate. 257-258 (EE) provides a ligand contact to substrate. Position 273 (R273) interacts with substrate. Residues D274, G278, D304, G322, and Y324 each contribute to the Ca(2+) site. R348 lines the substrate pocket. The Nucleophile role is filled by Y382.

This sequence belongs to the glycosyl hydrolase 34 family. As to quaternary structure, homotetramer. Requires Ca(2+) as cofactor. In terms of processing, N-glycosylated.

It localises to the virion membrane. Its subcellular location is the host apical cell membrane. It carries out the reaction Hydrolysis of alpha-(2-&gt;3)-, alpha-(2-&gt;6)-, alpha-(2-&gt;8)- glycosidic linkages of terminal sialic acid residues in oligosaccharides, glycoproteins, glycolipids, colominic acid and synthetic substrates.. Inhibited by the neuraminidase inhibitors zanamivir (Relenza) and oseltamivir (Tamiflu). These drugs interfere with the release of progeny virus from infected cells and are effective against all influenza strains. Resistance to neuraminidase inhibitors is quite rare. Functionally, catalyzes the removal of terminal sialic acid residues from viral and cellular glycoconjugates. Cleaves off the terminal sialic acids on the glycosylated HA during virus budding to facilitate virus release. Additionally helps virus spread through the circulation by further removing sialic acids from the cell surface. These cleavages prevent self-aggregation and ensure the efficient spread of the progeny virus from cell to cell. Otherwise, infection would be limited to one round of replication. Described as a receptor-destroying enzyme because it cleaves a terminal sialic acid from the cellular receptors. May facilitate viral invasion of the upper airways by cleaving the sialic acid moities on the mucin of the airway epithelial cells. Likely to plays a role in the budding process through its association with lipid rafts during intracellular transport. May additionally display a raft-association independent effect on budding. Plays a role in the determination of host range restriction on replication and virulence. Sialidase activity in late endosome/lysosome traffic seems to enhance virus replication. The chain is Neuraminidase from Influenza A virus (strain A/Vietnam/1203/2004 H5N1).